We begin with the raw amino-acid sequence, 273 residues long: Formamidopyrimidine-DNA glycosylase (273 aa).

The active-site Schiff-base intermediate with DNA is the P2. E3 functions as the Proton donor in the catalytic mechanism. K57 functions as the Proton donor; for beta-elimination activity in the catalytic mechanism. Residues H91, R110, and K151 each coordinate DNA. An FPG-type zinc finger spans residues 236–270 (QVYGRKDEACNDCGTIIEAKVIGQRNSYFCPHCQM). R260 functions as the Proton donor; for delta-elimination activity in the catalytic mechanism.

Belongs to the FPG family. Monomer. Requires Zn(2+) as cofactor.

The enzyme catalyses Hydrolysis of DNA containing ring-opened 7-methylguanine residues, releasing 2,6-diamino-4-hydroxy-5-(N-methyl)formamidopyrimidine.. It carries out the reaction 2'-deoxyribonucleotide-(2'-deoxyribose 5'-phosphate)-2'-deoxyribonucleotide-DNA = a 3'-end 2'-deoxyribonucleotide-(2,3-dehydro-2,3-deoxyribose 5'-phosphate)-DNA + a 5'-end 5'-phospho-2'-deoxyribonucleoside-DNA + H(+). In terms of biological role, involved in base excision repair of DNA damaged by oxidation or by mutagenic agents. Acts as a DNA glycosylase that recognizes and removes damaged bases. Has a preference for oxidized purines, such as 7,8-dihydro-8-oxoguanine (8-oxoG). Has AP (apurinic/apyrimidinic) lyase activity and introduces nicks in the DNA strand. Cleaves the DNA backbone by beta-delta elimination to generate a single-strand break at the site of the removed base with both 3'- and 5'-phosphates. In Actinobacillus pleuropneumoniae serotype 5b (strain L20), this protein is Formamidopyrimidine-DNA glycosylase.